The chain runs to 555 residues: O-fucosyltransferase 20 (555 aa).

The Cytoplasmic segment spans residues 1–58 (MALPKNGGNSSSTKKKVSYISVPSQIINSLSSSSLQSLLVSPKKSSRCTNRFSYRNPR). Residues 59-79 (IWFLTLFLVSLFGMLKLGLNV) traverse the membrane as a helical; Signal-anchor for type II membrane protein segment. The Lumenal portion of the chain corresponds to 80-555 (DPISLPFSRY…MCSDRRQQQQ (476 aa)). A disordered region spans residues 110–130 (KNDTQSSSSSEHRKNETLPTE). N-linked (GlcNAc...) asparagine glycans are attached at residues asparagine 111 and asparagine 124. Position 330 to 332 (330 to 332 (HLR)) interacts with substrate. Residues asparagine 371 and asparagine 503 are each glycosylated (N-linked (GlcNAc...) asparagine). Residues 525 to 555 (QPELRTGRGGKDVTKHPVSECMCSDRRQQQQ) are disordered. Over residues 529 to 555 (RTGRGGKDVTKHPVSECMCSDRRQQQQ) the composition is skewed to basic and acidic residues.

Belongs to the glycosyltransferase GT106 family. As to expression, highly expressed in embryogenic microspore and in vegetative tissues.

The protein localises to the golgi apparatus membrane. The protein operates within glycan metabolism. Its function is as follows. May play a role in the biosynthesis of matrix polysaccharides and contribute to the biomechanics and development of the plant cell wall. The chain is O-fucosyltransferase 20 from Brassica napus (Rape).